Reading from the N-terminus, the 315-residue chain is Protein ORANGE-LIKE, chloroplastic (315 aa).

The N-terminal 16 residues, Met-1–Leu-16, are a transit peptide targeting the chloroplast. 2 consecutive transmembrane segments (helical) span residues Leu-155–Pro-175 and Ile-207–Val-227. The CR-type zinc finger occupies Ile-225–His-307. Residues Cys-238–Gly-245 form a CXXCXGXG motif repeat. One copy of the CXXCXXXG motif repeat lies at Cys-249 to Gly-256. One copy of the CXXCXGXG motif repeat lies at Cys-282–Gly-289. One copy of the CXXCXXXG motif repeat lies at Cys-293–Gly-300.

The protein belongs to the orange-like family. As to quaternary structure, interacts with PSY1.

The protein localises to the plastid. It localises to the chloroplast membrane. Functionally, may be associated with accumulation of carotenoids in chromoplasts. The sequence is that of Protein ORANGE-LIKE, chloroplastic (ORLIKE) from Arabidopsis thaliana (Mouse-ear cress).